The chain runs to 409 residues: tRNA-specific 2-thiouridylase MnmA (409 aa).

ATP is bound by residues 20 to 27 (AMSGGVDS) and Leu46. Cys114 serves as the catalytic Nucleophile. Cys114 and Cys210 are disulfide-bonded. Gly138 contributes to the ATP binding site. The segment at 160–162 (RDQ) is interaction with tRNA. The active-site Cysteine persulfide intermediate is the Cys210.

The protein belongs to the MnmA/TRMU family.

Its subcellular location is the cytoplasm. The enzyme catalyses S-sulfanyl-L-cysteinyl-[protein] + uridine(34) in tRNA + AH2 + ATP = 2-thiouridine(34) in tRNA + L-cysteinyl-[protein] + A + AMP + diphosphate + H(+). Catalyzes the 2-thiolation of uridine at the wobble position (U34) of tRNA, leading to the formation of s(2)U34. The polypeptide is tRNA-specific 2-thiouridylase MnmA (Bartonella henselae (strain ATCC 49882 / DSM 28221 / CCUG 30454 / Houston 1) (Rochalimaea henselae)).